The sequence spans 2381 residues: Protein Ycf2 (2381 aa).

ATP is bound at residue 1655–1662 (GPMETGRS).

It belongs to the Ycf2 family.

Its subcellular location is the plastid. It is found in the chloroplast stroma. Its function is as follows. Probable ATPase of unknown function. Its presence in a non-photosynthetic plant (Epifagus virginiana) and experiments in tobacco indicate that it has an essential function which is probably not related to photosynthesis. The sequence is that of Protein Ycf2 from Angiopteris evecta (Mule's foot fern).